Reading from the N-terminus, the 66-residue chain is Rho-elapitoxin-Da1b (66 aa).

Cystine bridges form between cysteine 3-cysteine 24, cysteine 17-cysteine 42, cysteine 46-cysteine 58, and cysteine 59-cysteine 64.

This sequence belongs to the three-finger toxin family. Short-chain subfamily. Aminergic toxin sub-subfamily. In terms of tissue distribution, expressed by the venom gland.

It localises to the secreted. In terms of biological role, non-competitive antagonist of alpha-2 adrenergic receptors (ADRA2) in smooth muscles, and partial antagonist of D3 dopamine receptors (DRD3) (inhibits 25% of methylspiperone binding to this receptor). Also shows a low antagonism on D2 dopamine receptors (DRD2) (short isoform). Shows high affinity to adrenergic receptors (Ki=14 nM (ADRA2A), Ki=73 nM (ADRA2B), and Ki=38 nM (ADRA2C)). Increases heart rate and blood catecholamine concentrations. The polypeptide is Rho-elapitoxin-Da1b (Dendroaspis angusticeps (Eastern green mamba)).